We begin with the raw amino-acid sequence, 178 residues long: Caveolin-1 (178 aa).

An N-acetylserine modification is found at Ser-2. Ser-2 carries the post-translational modification Phosphoserine. Residues 2–94 (SGGKYVDSEG…WKASFTTFTV (93 aa)) form a required for homooligomerization region. At 2–104 (SGGKYVDSEG…TKYWFYRLLS (103 aa)) the chain is on the cytoplasmic side. An N6-acetyllysine; alternate modification is found at Lys-5. Lys-5 participates in a covalent cross-link: Glycyl lysine isopeptide (Lys-Gly) (interchain with G-Cter in ubiquitin); alternate. Tyr-6 carries the post-translational modification Phosphotyrosine. The residue at position 9 (Ser-9) is a Phosphoserine. At Tyr-14 the chain carries Phosphotyrosine; by ABL1. Tyr-25 is modified (phosphotyrosine). Glycyl lysine isopeptide (Lys-Gly) (interchain with G-Cter in ubiquitin) cross-links involve residues Lys-26 and Lys-30. Residue Ser-37 is modified to Phosphoserine. Residues Lys-39, Lys-47, and Lys-57 each participate in a glycyl lysine isopeptide (Lys-Gly) (interchain with G-Cter in ubiquitin) cross-link. The tract at residues 82-94 (DGIWKASFTTFTV) is interaction with CAVIN3. The segment at residues 105–125 (ALFGIPMALIWGIYFAILSFL) is an intramembrane region (helical). Topologically, residues 126–178 (HIWAVVPCIKSFLIEIQCISRVYSIYVHTVCDPLFEAVGKIFSNVRINLQKEI) are cytoplasmic. An interacts with SPRY1, SPRY2, SPRY3 and SPRY4 region spans residues 131–142 (VPCIKSFLIEIQ). Residues Cys-133, Cys-143, and Cys-156 are each lipidated (S-palmitoyl cysteine). The tract at residues 149 to 160 (SIYVHTVCDPLF) is interacts with SPRY1, SPRY2, and SPRY4. An interacts with SPRY1, SPRY2, SPRY3 and SPRY4 region spans residues 167 to 178 (FSNVRINLQKEI).

The protein belongs to the caveolin family. Homooligomer. Interacts (via the N-terminus) with DPP4; the interaction is direct. Forms a stable heterooligomeric complex with CAV2 that targets to lipid rafts and drives caveolae formation. Interacts with PACSIN2; this interaction induces membrane tubulation. Interacts with BMX, BTK, CTNNB1, CDH1, GLIPR2, JUP, NOSTRIN, SNAP25 and STX1A. Interacts with SLC7A9. Interacts with TGFBR1. Interacts with CAVIN3 (via leucine-zipper domain) in a cholesterol-sensitive manner. Interacts with CAVIN1. Interacts with EHD2 in a cholesterol-dependent manner. Forms a ternary complex with UBXN6 and VCP; mediates CAV1 targeting to lysosomes for degradation. Interacts with ABCG1; this interaction regulates ABCG1-mediated cholesterol efflux. Interacts with NEU3; this interaction enhances NEU3 sialidase activity within caveola. Interacts (via C-terminus) with SPRY1, SPRY2 (via C-terminus), SPRY3, and SPRY4. Interacts with IGFBP5; this interaction allows trafficking of IGFBP5 from the plasma membrane to the nucleus. In terms of processing, phosphorylated at Tyr-14 by ABL1 in response to oxidative stress. Ubiquitinated. Undergo monoubiquitination and multi- and/or polyubiquitination. Monoubiquitination of N-terminal lysines promotes integration in a ternary complex with UBXN6 and VCP which promotes oligomeric CAV1 targeting to lysosomes for degradation. Ubiquitinated by ZNRF1; leading to degradation and modulation of the TLR4-mediated immune response.

The protein localises to the golgi apparatus membrane. Its subcellular location is the cell membrane. The protein resides in the membrane. It localises to the caveola. It is found in the membrane raft. In terms of biological role, may act as a scaffolding protein within caveolar membranes. Forms a stable heterooligomeric complex with CAV2 that targets to lipid rafts and drives caveolae formation. Mediates the recruitment of CAVIN proteins (CAVIN1/2/3/4) to the caveolae. Interacts directly with G-protein alpha subunits and can functionally regulate their activity. Involved in the costimulatory signal essential for T-cell receptor (TCR)-mediated T-cell activation. Its binding to DPP4 induces T-cell proliferation and NF-kappa-B activation in a T-cell receptor/CD3-dependent manner. Recruits CTNNB1 to caveolar membranes and may regulate CTNNB1-mediated signaling through the Wnt pathway. Negatively regulates TGFB1-mediated activation of SMAD2/3 by mediating the internalization of TGFBR1 from membrane rafts leading to its subsequent degradation. Binds 20(S)-hydroxycholesterol (20(S)-OHC). In Chlorocebus aethiops (Green monkey), this protein is Caveolin-1 (CAV1).